The primary structure comprises 208 residues: Uracil phosphoribosyltransferase (208 aa).

5-phospho-alpha-D-ribose 1-diphosphate-binding positions include Arg-78, Arg-103, and 130–138 (DPMLATGGS). Uracil is bound by residues Ile-193 and 198–200 (GDA). Asp-199 contributes to the 5-phospho-alpha-D-ribose 1-diphosphate binding site.

Belongs to the UPRTase family. Mg(2+) is required as a cofactor.

The catalysed reaction is UMP + diphosphate = 5-phospho-alpha-D-ribose 1-diphosphate + uracil. Its pathway is pyrimidine metabolism; UMP biosynthesis via salvage pathway; UMP from uracil: step 1/1. Its activity is regulated as follows. Allosterically activated by GTP. Functionally, catalyzes the conversion of uracil and 5-phospho-alpha-D-ribose 1-diphosphate (PRPP) to UMP and diphosphate. In Shewanella piezotolerans (strain WP3 / JCM 13877), this protein is Uracil phosphoribosyltransferase.